Reading from the N-terminus, the 90-residue chain is Acylphosphatase (90 aa).

One can recognise an Acylphosphatase-like domain in the interval 5–90 (CERFIVKGHV…YKPFRGFKIL (86 aa)). Active-site residues include arginine 20 and asparagine 38.

This sequence belongs to the acylphosphatase family.

The enzyme catalyses an acyl phosphate + H2O = a carboxylate + phosphate + H(+). This is Acylphosphatase (acyP) from Vibrio parahaemolyticus serotype O3:K6 (strain RIMD 2210633).